The primary structure comprises 345 residues: Mannonate dehydratase 2 (345 aa).

Belongs to the mannonate dehydratase family. It depends on Fe(2+) as a cofactor. The cofactor is Mn(2+).

It carries out the reaction D-mannonate = 2-dehydro-3-deoxy-D-gluconate + H2O. It functions in the pathway carbohydrate metabolism; pentose and glucuronate interconversion. Catalyzes the dehydration of D-mannonate. The sequence is that of Mannonate dehydratase 2 (uxuA2) from Halalkalibacterium halodurans (strain ATCC BAA-125 / DSM 18197 / FERM 7344 / JCM 9153 / C-125) (Bacillus halodurans).